We begin with the raw amino-acid sequence, 373 residues long: 4-hydroxy-3-methylbut-2-en-1-yl diphosphate synthase (flavodoxin) (373 aa).

Positions 270, 273, 305, and 312 each coordinate [4Fe-4S] cluster.

It belongs to the IspG family. [4Fe-4S] cluster serves as cofactor.

The enzyme catalyses (2E)-4-hydroxy-3-methylbut-2-enyl diphosphate + oxidized [flavodoxin] + H2O + 2 H(+) = 2-C-methyl-D-erythritol 2,4-cyclic diphosphate + reduced [flavodoxin]. The protein operates within isoprenoid biosynthesis; isopentenyl diphosphate biosynthesis via DXP pathway; isopentenyl diphosphate from 1-deoxy-D-xylulose 5-phosphate: step 5/6. Its function is as follows. Converts 2C-methyl-D-erythritol 2,4-cyclodiphosphate (ME-2,4cPP) into 1-hydroxy-2-methyl-2-(E)-butenyl 4-diphosphate. The polypeptide is 4-hydroxy-3-methylbut-2-en-1-yl diphosphate synthase (flavodoxin) (Photorhabdus laumondii subsp. laumondii (strain DSM 15139 / CIP 105565 / TT01) (Photorhabdus luminescens subsp. laumondii)).